We begin with the raw amino-acid sequence, 491 residues long: Interferon regulatory factor 3 (491 aa).

Residues 12–116 (KLRFGPWLLN…DPHKVYAVAS (105 aa)) constitute a DNA-binding region (IRF tryptophan pentad repeat).

The protein belongs to the IRF family. In terms of tissue distribution, widely expressed with higher expression in lung, spleen and intestine.

It is found in the cytoplasm. Its subcellular location is the nucleus. Key transcriptional regulator of type I interferon (IFN)-dependent immune responses which plays a critical role in the innate immune response against DNA and RNA viruses. Regulates the transcription of type I IFN genes (IFN-alpha and IFN-beta) and IFN-stimulated genes (ISG) by binding to an interferon-stimulated response element (ISRE) in their promoters. May activate transcription by complex formation with other transcriptional factors, possibly members of the STAT family. Binds specifically to the IFN-stimulated response element (ISRE) but not to the IRF-1 binding site PRD-I. The protein is Interferon regulatory factor 3 (IRF3) of Gallus gallus (Chicken).